We begin with the raw amino-acid sequence, 578 residues long: DNA primase (578 aa).

A CHC2-type zinc finger spans residues 40–64 (CPFHQEKTPSFTVNFEKQFYFCFGC). Residues 257–339 (KQILIVEGYV…GKNVKFIFLP (83 aa)) form the Toprim domain. The Mg(2+) site is built by E263, D307, and D309.

This sequence belongs to the DnaG primase family. Monomer. Interacts with DnaB. It depends on Zn(2+) as a cofactor. Mg(2+) is required as a cofactor.

It carries out the reaction ssDNA + n NTP = ssDNA/pppN(pN)n-1 hybrid + (n-1) diphosphate.. RNA polymerase that catalyzes the synthesis of short RNA molecules used as primers for DNA polymerase during DNA replication. This Buchnera aphidicola subsp. Baizongia pistaciae (strain Bp) protein is DNA primase.